Reading from the N-terminus, the 214-residue chain is Thymidylate kinase (214 aa).

10-17 (GGEGVGKT) is a binding site for ATP.

The protein belongs to the thymidylate kinase family.

The catalysed reaction is dTMP + ATP = dTDP + ADP. Functionally, phosphorylation of dTMP to form dTDP in both de novo and salvage pathways of dTTP synthesis. This Bartonella quintana (strain Toulouse) (Rochalimaea quintana) protein is Thymidylate kinase.